Here is an 82-residue protein sequence, read N- to C-terminus: MVVIRMARGGAKKRPFYRIVVADKRSPRDGRFIEKLGFFNPLAKGGEERLKLDVAKAEAWLAKGAQPSDRVASLIKEAKKVA.

The protein belongs to the bacterial ribosomal protein bS16 family.

The sequence is that of Small ribosomal subunit protein bS16 from Francisella philomiragia subsp. philomiragia (strain ATCC 25017 / CCUG 19701 / FSC 153 / O#319-036).